A 225-amino-acid chain; its full sequence is NAD(P)H-quinone oxidoreductase subunit K, chloroplastic (225 aa).

Cys43, Cys44, Cys108, and Cys139 together coordinate [4Fe-4S] cluster.

The protein belongs to the complex I 20 kDa subunit family. As to quaternary structure, NDH is composed of at least 16 different subunits, 5 of which are encoded in the nucleus. [4Fe-4S] cluster serves as cofactor.

It localises to the plastid. Its subcellular location is the chloroplast thylakoid membrane. It carries out the reaction a plastoquinone + NADH + (n+1) H(+)(in) = a plastoquinol + NAD(+) + n H(+)(out). The enzyme catalyses a plastoquinone + NADPH + (n+1) H(+)(in) = a plastoquinol + NADP(+) + n H(+)(out). In terms of biological role, NDH shuttles electrons from NAD(P)H:plastoquinone, via FMN and iron-sulfur (Fe-S) centers, to quinones in the photosynthetic chain and possibly in a chloroplast respiratory chain. The immediate electron acceptor for the enzyme in this species is believed to be plastoquinone. Couples the redox reaction to proton translocation, and thus conserves the redox energy in a proton gradient. In Nasturtium officinale (Watercress), this protein is NAD(P)H-quinone oxidoreductase subunit K, chloroplastic.